The sequence spans 243 residues: Vesicle-associated membrane protein-associated protein B (243 aa).

Position 2 is an N-acetylalanine (A2). Over 2–218 (AKVEQVLSLE…PASAMAGKEE (217 aa)) the chain is Cytoplasmic. Residues 7–124 (VLSLEPQHEL…MDSKLRCVFE (118 aa)) enclose the MSP domain. S146 carries the phosphoserine modification. K147 participates in a covalent cross-link: Glycyl lysine isopeptide (Lys-Gly) (interchain with G-Cter in SUMO1). Phosphothreonine is present on T150. S158, S159, and S160 each carry phosphoserine. Positions 161 to 196 (LDDTEVKKVMEECKRLQSEVQRLREENKQFKEEDGL) form a coiled coil. A compositionally biased stretch (basic and acidic residues) spans 186-197 (ENKQFKEEDGLR). The interval 186–214 (ENKQFKEEDGLRMRKTAQSNSPAPASAMA) is disordered. S206 carries the post-translational modification Phosphoserine. A helical; Anchor for type IV membrane protein membrane pass occupies residues 219–239 (GLSTRLLALVVLFFIVGVIIG).

Belongs to the VAMP-associated protein (VAP) (TC 9.B.17) family. As to quaternary structure, homodimer, and heterodimer with VAPA. Interacts with VAMP1 and VAMP2. Interacts (via MSP domain) with ZFYVE27. Interacts with RMDN3. Interacts with KIF5A in a ZFYVE27-dependent manner. Interacts (via MSP domain) with STARD3 (via phospho-FFAT motif). Interacts with STARD3NL (via FFAT motif). Interacts with CERT1. Interacts with PLEKHA3 and SACM1L to form a ternary complex. Interacts with VPS13A (via FFAT motif). Interacts with RB1CC1 (via phosphorylated FFAT motif), MIGA2 (via phosphorylated FFAT motif), RMDN3 (via phosphorylated FFAT motif), OSBPL1A (via FFAT motif), KCNB1 (via phosphorylated FFAT motif) and KCNB2 (via phosphorylated FFAT motif). Interacts (via MSP domain) with WDR44 (via FFAT motif); the interactions connect the endoplasmic reticulum (ER) with the endosomal tubule.

It localises to the endoplasmic reticulum membrane. Functionally, endoplasmic reticulum (ER)-anchored protein that mediates the formation of contact sites between the ER and endosomes via interaction with FFAT motif-containing proteins such as STARD3 or WDR44. Interacts with STARD3 in a FFAT motif phosphorylation dependent manner. Via interaction with WDR44 participates in neosynthesized protein export. Participates in the endoplasmic reticulum unfolded protein response (UPR) by inducing ERN1/IRE1 activity. Involved in cellular calcium homeostasis regulation. The polypeptide is Vesicle-associated membrane protein-associated protein B (Bos taurus (Bovine)).